A 515-amino-acid polypeptide reads, in one-letter code: Maturase K (515 aa).

It belongs to the intron maturase 2 family. MatK subfamily.

It localises to the plastid. Its subcellular location is the chloroplast. In terms of biological role, usually encoded in the trnK tRNA gene intron. Probably assists in splicing its own and other chloroplast group II introns. This chain is Maturase K, found in Cedrus deodara (Deodar cedar).